The primary structure comprises 790 residues: Phenylalanine--tRNA ligase beta subunit (790 aa).

The 116-residue stretch at proline 39–cysteine 154 folds into the tRNA-binding domain. A B5 domain is found at serine 404–proline 483. Residues aspartate 457, aspartate 463, glutamate 466, and glutamate 467 each coordinate Mg(2+). The FDX-ACB domain occupies proline 694 to serine 790.

This sequence belongs to the phenylalanyl-tRNA synthetase beta subunit family. Type 1 subfamily. As to quaternary structure, tetramer of two alpha and two beta subunits. The cofactor is Mg(2+).

The protein localises to the cytoplasm. The catalysed reaction is tRNA(Phe) + L-phenylalanine + ATP = L-phenylalanyl-tRNA(Phe) + AMP + diphosphate + H(+). This chain is Phenylalanine--tRNA ligase beta subunit (pheT), found in Chlamydia muridarum (strain MoPn / Nigg).